Reading from the N-terminus, the 567-residue chain is PEX5-related protein (567 aa).

Residues 56–105 (SEPVSQPQTKAKKSEPSSKSSSLKKKADGSDLISADAEQRAQALRGPETS) form a disordered region. Position 146 is a phosphoserine (S146). Residues 150 to 169 (LWSAEHRSQPELSTGKSALN) form a disordered region. Phosphoserine is present on residues S194, S198, and S202. TPR repeat units lie at residues 267–300 (WPGA…DPGD), 301–334 (AEAW…QPNN), and 336–368 (KALM…NPKY). Phosphoserine occurs at positions 386 and 388. TPR repeat units follow at residues 415–448 (PDLQ…RPED), 450–482 (SLWN…QPGF), and 484–516 (RSRY…QRKS).

The protein belongs to the peroxisomal targeting signal receptor family. As to quaternary structure, interacts with RAB8B. Forms an obligate 4:4 complex with HCN2. Interacts with HCN3. Interacts with HCN4 with a 4:4 HCN4:PEX5L stoichiometry; reduces the effects of cAMP on the voltage-dependence and rate of activation of HCN4.

The protein resides in the cytoplasm. The protein localises to the membrane. In terms of biological role, accessory subunit of hyperpolarization-activated cyclic nucleotide-gated (HCN) channels, regulating their cell-surface expression and cyclic nucleotide dependence. The polypeptide is PEX5-related protein (Pex5l) (Mus musculus (Mouse)).